We begin with the raw amino-acid sequence, 260 residues long: uncharacterized protein (260 aa).

Residues 4-231 (LHVDHVTHTY…PKELAAMLPF (228 aa)) enclose the ABC transporter domain. Residue 40 to 47 (GPSGCGKT) participates in ATP binding.

It belongs to the ABC transporter superfamily.

This is an uncharacterized protein from Bacillus subtilis (strain 168).